The following is a 642-amino-acid chain: DNA primase (642 aa).

The segment at 41-65 adopts a CHC2-type zinc-finger fold; it reads CPFHNEKSPSFHVRPNHGHFHCFGC. The 87-residue stretch at 262 to 348 folds into the Toprim domain; that stretch reads HQAVVVEGYT…AGKSFVAVAA (87 aa). Residues Glu268, Asp319, and Asp321 each coordinate Mg(2+). Residues 445–480 are disordered; sequence NRRSVPERTRRRSVSVEQSPFMQPPGAPADQLAARP.

Belongs to the DnaG primase family. As to quaternary structure, monomer. Interacts with DnaB. Zn(2+) is required as a cofactor. It depends on Mg(2+) as a cofactor.

It carries out the reaction ssDNA + n NTP = ssDNA/pppN(pN)n-1 hybrid + (n-1) diphosphate.. RNA polymerase that catalyzes the synthesis of short RNA molecules used as primers for DNA polymerase during DNA replication. The protein is DNA primase of Mycobacterium leprae (strain TN).